A 219-amino-acid polypeptide reads, in one-letter code: ATP synthase delta chain, chloroplastic (219 aa).

The transit peptide at 1-33 directs the protein to the chloroplast; it reads MLAAKSIAGPRAFKASAVRAAPKAGRRTVVVMA.

This sequence belongs to the ATPase delta chain family. F-type ATPases have 2 components, F(1) - the catalytic core - and F(0) - the membrane proton channel. F(1) has five subunits: alpha(3), beta(3), gamma(1), delta(1), epsilon(1). F(0) has four main subunits: a(1), b(1), b'(1) and c(10-14). The alpha and beta chains form an alternating ring which encloses part of the gamma chain. F(1) is attached to F(0) by a central stalk formed by the gamma and epsilon chains, while a peripheral stalk is formed by the delta, b and b' chains.

The protein localises to the plastid. It is found in the chloroplast thylakoid membrane. F(1)F(0) ATP synthase produces ATP from ADP in the presence of a proton or sodium gradient. F-type ATPases consist of two structural domains, F(1) containing the extramembraneous catalytic core and F(0) containing the membrane proton channel, linked together by a central stalk and a peripheral stalk. During catalysis, ATP synthesis in the catalytic domain of F(1) is coupled via a rotary mechanism of the central stalk subunits to proton translocation. In terms of biological role, this protein seems to be part of the stalk that links CF(0) to CF(1). It either transmits conformational changes from CF(0) into CF(1) or is implicated in proton conduction. In Chlamydomonas reinhardtii (Chlamydomonas smithii), this protein is ATP synthase delta chain, chloroplastic.